Reading from the N-terminus, the 342-residue chain is Dihydroorotase (342 aa).

Residues H13 and H15 each contribute to the Zn(2+) site. Substrate-binding positions include 15–17 (HLR) and N41. Residues K98, H135, and H173 each coordinate Zn(2+). K98 bears the N6-carboxylysine mark. Residue H135 participates in substrate binding. A substrate-binding site is contributed by L218. D246 contributes to the Zn(2+) binding site. Residue D246 is part of the active site. Substrate contacts are provided by H250 and A262.

It belongs to the metallo-dependent hydrolases superfamily. DHOase family. Class II DHOase subfamily. In terms of assembly, homodimer. Requires Zn(2+) as cofactor.

The enzyme catalyses (S)-dihydroorotate + H2O = N-carbamoyl-L-aspartate + H(+). Its pathway is pyrimidine metabolism; UMP biosynthesis via de novo pathway; (S)-dihydroorotate from bicarbonate: step 3/3. Catalyzes the reversible cyclization of carbamoyl aspartate to dihydroorotate. This Vibrio cholerae serotype O1 (strain ATCC 39315 / El Tor Inaba N16961) protein is Dihydroorotase.